Consider the following 443-residue polypeptide: Probable glutamate dehydrogenase (443 aa).

The active site involves K86.

This sequence belongs to the Glu/Leu/Phe/Val dehydrogenases family.

It carries out the reaction L-glutamate + NAD(+) + H2O = 2-oxoglutarate + NH4(+) + NADH + H(+). It catalyses the reaction L-glutamate + NADP(+) + H2O = 2-oxoglutarate + NH4(+) + NADPH + H(+). This is Probable glutamate dehydrogenase from Sinorhizobium fredii (strain NBRC 101917 / NGR234).